Consider the following 349-residue polypeptide: Short chain dehydrogenase/reductase dpfgH (349 aa).

The helical transmembrane segment at 9 to 31 (LCIRVVDSLYGSFLYLPLAILFL) threads the bilayer. Residues I65, R89, and D115 each coordinate NADP(+). An N-linked (GlcNAc...) asparagine glycan is attached at N118. 2 residues coordinate NADP(+): N142 and K164. Residues S191 and S192 each act as proton donor in the active site. Y223 and K227 together coordinate NADP(+). Y223 acts as the Proton acceptor in catalysis. Residue K227 is the Lowers pKa of active site Tyr of the active site. N-linked (GlcNAc...) asparagine glycosylation is present at N334.

It belongs to the short-chain dehydrogenases/reductases (SDR) family.

Its subcellular location is the membrane. The protein operates within secondary metabolite biosynthesis; terpenoid biosynthesis. Its function is as follows. Short chain dehydrogenase/reductase; part of the gene cluster that mediates the biosynthesis of diterpenoid pyrones. The first step of the pathway is the synthesis of the alpha-pyrone moiety by the polyketide synthase dpfgA via condensation of one acetyl-CoA starter unit with 3 malonyl-CoA units and 2 methylations. The alpha-pyrone is then combined with geranylgeranyl pyrophosphate (GGPP) formed by the GGPP synthase dpfgD through the action of the prenyltransferase dpfgC to yield a linear alpha-pyrone diterpenoid. Subsequent steps in the diterpenoid pyrone biosynthetic pathway involve the decalin core formation, which is initiated by the epoxidation of the C10-C11 olefin by the FAD-dependent oxidoreductase dpfgE, and is followed by a cyclization cascade catalyzed by the terpene cyclase dpfgB. The short chain dehydrogenase/reductase dpfgG then oxidizes the 8S hydroxy group to a ketone and the short chain dehydrogenase/reductase dpfgH reduces the ketone to the 8R hydroxy group to yield higginsianin B. Higginsianin B is further methylated by the methyltransferase dpfgI to produce the intermediate named FDDP B. The cytochrome P450 monooxygenase dfgpJ then catalyzes a three-step oxidation at C-27 to generate a carboxylic acid as well as C-26 hydroxylation. Finally, methyltransferase dpfgK methylates the carboxylic acid generated by dpfgJ, yielding the final diterpenoid pyrones from the pathway which were named FDDP D and FDDP E. The protein is Short chain dehydrogenase/reductase dpfgH of Gibberella zeae (strain ATCC MYA-4620 / CBS 123657 / FGSC 9075 / NRRL 31084 / PH-1) (Wheat head blight fungus).